The sequence spans 598 residues: Serine hydroxymethyltransferase 7 (598 aa).

Residues 57-85 (QLLEQKAEKTTTVDEPKKDGGGGGDQKED) form a disordered region. The segment covering 61 to 85 (QKAEKTTTVDEPKKDGGGGGDQKED) has biased composition (basic and acidic residues). Lys-370 bears the N6-(pyridoxal phosphate)lysine mark.

It belongs to the SHMT family. As to quaternary structure, homotetramer. Pyridoxal 5'-phosphate serves as cofactor.

It is found in the cytoplasm. It catalyses the reaction (6R)-5,10-methylene-5,6,7,8-tetrahydrofolate + glycine + H2O = (6S)-5,6,7,8-tetrahydrofolate + L-serine. It functions in the pathway one-carbon metabolism; tetrahydrofolate interconversion. Its function is as follows. Catalyzes the interconversion of serine and glycine. This chain is Serine hydroxymethyltransferase 7 (SHM7), found in Arabidopsis thaliana (Mouse-ear cress).